Here is a 75-residue protein sequence, read N- to C-terminus: uncharacterized protein (75 aa).

Positions 19–38 (FHNTAPSKTNVNVPRANKSQ) are enriched in polar residues. Positions 19-42 (FHNTAPSKTNVNVPRANKSQSKGK) are disordered. A helical membrane pass occupies residues 47–66 (LLVLVGTLALVTSVISVNYQ).

The protein resides in the membrane. This is an uncharacterized protein from Saccharomyces cerevisiae (strain ATCC 204508 / S288c) (Baker's yeast).